The following is a 289-amino-acid chain: 4-hydroxybenzoate octaprenyltransferase (289 aa).

9 consecutive transmembrane segments (helical) span residues I19 to L39, I42 to I62, G85 to I105, V107 to L127, F134 to F154, A165 to L185, I211 to F231, S233 to Y253, and F265 to I285.

Belongs to the UbiA prenyltransferase family. Requires Mg(2+) as cofactor.

The protein localises to the cell inner membrane. It carries out the reaction all-trans-octaprenyl diphosphate + 4-hydroxybenzoate = 4-hydroxy-3-(all-trans-octaprenyl)benzoate + diphosphate. It functions in the pathway cofactor biosynthesis; ubiquinone biosynthesis. Catalyzes the prenylation of para-hydroxybenzoate (PHB) with an all-trans polyprenyl group. Mediates the second step in the final reaction sequence of ubiquinone-8 (UQ-8) biosynthesis, which is the condensation of the polyisoprenoid side chain with PHB, generating the first membrane-bound Q intermediate 3-octaprenyl-4-hydroxybenzoate. The polypeptide is 4-hydroxybenzoate octaprenyltransferase (Francisella tularensis subsp. holarctica (strain FTNF002-00 / FTA)).